The chain runs to 252 residues: MPRYKLVIEYDGGPFCGWQRQADDPTVQAAIETAVTRFSGETARLTCAGRTDAGVHAIHQVAHLDLARDWRTDTVRDALNAHLRPQPIAIVSAEVVTHDFDARHSAIRRHYRYRILNRRSPAALTRAHVWHVPWPLDADLMHAAAQRLLGRHDFSAFRAAECQAASPVRTLEQLDVTRQRMGLFEEIVIATSARSFLHHQVRAMAGTLMLAGCRRLSADDVAEILATKAKHRCGPLAPACGLTFVGVDYDEK.

Residue Asp-52 is the Nucleophile of the active site. Tyr-111 contacts substrate.

Belongs to the tRNA pseudouridine synthase TruA family. Homodimer.

The catalysed reaction is uridine(38/39/40) in tRNA = pseudouridine(38/39/40) in tRNA. Formation of pseudouridine at positions 38, 39 and 40 in the anticodon stem and loop of transfer RNAs. This is tRNA pseudouridine synthase A from Methylorubrum populi (strain ATCC BAA-705 / NCIMB 13946 / BJ001) (Methylobacterium populi).